We begin with the raw amino-acid sequence, 290 residues long: Acetyl-coenzyme A carboxylase carboxyl transferase subunit beta (290 aa).

The region spanning 28–290 (IMTKCPKCKK…SRGGDEWHTN (263 aa)) is the CoA carboxyltransferase N-terminal domain. Zn(2+) is bound by residues cysteine 32, cysteine 35, cysteine 51, and cysteine 54. The segment at 32–54 (CPKCKKIMYTKELVKNLRVCISC) adopts a C4-type zinc-finger fold.

It belongs to the AccD/PCCB family. Acetyl-CoA carboxylase is a heterohexamer composed of biotin carboxyl carrier protein (AccB), biotin carboxylase (AccC) and two subunits each of ACCase subunit alpha (AccA) and ACCase subunit beta (AccD). It depends on Zn(2+) as a cofactor.

It localises to the cytoplasm. It catalyses the reaction N(6)-carboxybiotinyl-L-lysyl-[protein] + acetyl-CoA = N(6)-biotinyl-L-lysyl-[protein] + malonyl-CoA. It functions in the pathway lipid metabolism; malonyl-CoA biosynthesis; malonyl-CoA from acetyl-CoA: step 1/1. Component of the acetyl coenzyme A carboxylase (ACC) complex. Biotin carboxylase (BC) catalyzes the carboxylation of biotin on its carrier protein (BCCP) and then the CO(2) group is transferred by the transcarboxylase to acetyl-CoA to form malonyl-CoA. The protein is Acetyl-coenzyme A carboxylase carboxyl transferase subunit beta of Anoxybacillus flavithermus (strain DSM 21510 / WK1).